The sequence spans 279 residues: MTLLRGDDFFTSRAVTVAVEPRTPQTAFPEHYHDFWEIVLVEQGAGVHVFNDQPYALCSGSVFFVRDNDRHLFEDVEGLCLTNMLYRSPRGFRFLSDIAAFLPYGPNGEWQGQWQVNAAGMQQLKQSLNSLAELAQSDAPEAIAASESLFLHILVQLRQQCFQTQSSGSERQGVQALLGWLQNNYSEEVNWGSLADRFSLPLRTLHRQLKQHTGMTPQRYLNRLRLLEARRRLQQSDDSITTIAHACGFSDSNHFSTQFRKAFSQAPKSLRHQAFSREE.

The HTH araC/xylS-type domain maps to 175 to 273 (QALLGWLQNN…SQAPKSLRHQ (99 aa)). 2 consecutive DNA-binding regions (H-T-H motif) follow at residues 192-213 (GSLA…KQHT) and 240-263 (ITTI…RKAF).

As to quaternary structure, binds DNA as a dimer.

It is found in the cytoplasm. Activates expression of the rhaBAD and rhaT operons. This chain is HTH-type transcriptional activator RhaS, found in Pectobacterium carotovorum subsp. carotovorum (strain PC1).